The following is a 410-amino-acid chain: Argininosuccinate synthase (410 aa).

Ala-10–Ser-18 is an ATP binding site. Residues Tyr-88 and Ser-93 each coordinate L-citrulline. Gly-118 is a binding site for ATP. Positions 120, 124, and 125 each coordinate L-aspartate. Asn-124 is a binding site for L-citrulline. Positions 128, 177, 186, 262, and 274 each coordinate L-citrulline.

It belongs to the argininosuccinate synthase family. Type 1 subfamily. As to quaternary structure, homotetramer.

Its subcellular location is the cytoplasm. The catalysed reaction is L-citrulline + L-aspartate + ATP = 2-(N(omega)-L-arginino)succinate + AMP + diphosphate + H(+). The protein operates within amino-acid biosynthesis; L-arginine biosynthesis; L-arginine from L-ornithine and carbamoyl phosphate: step 2/3. The polypeptide is Argininosuccinate synthase (Caldanaerobacter subterraneus subsp. tengcongensis (strain DSM 15242 / JCM 11007 / NBRC 100824 / MB4) (Thermoanaerobacter tengcongensis)).